A 167-amino-acid polypeptide reads, in one-letter code: Leptin (167 aa).

A signal peptide spans methionine 1–alanine 21. The cysteines at positions 117 and 167 are disulfide-linked.

It belongs to the leptin family. Interacts with SIGLEC6. In terms of tissue distribution, adipose tissue is the main source of leptin. It is also produced by other peripheral tissues such as the skeletal muscle. Expressed by intercalated and striated tracts of submandibular and parotid salivary gland intralobular ducts. Detected by fundic epithelium of the gastric mucosa. Secreted into blood and gastric juice.

Its subcellular location is the secreted. In terms of biological role, key player in the regulation of energy balance and body weight control. Once released into the circulation, has central and peripheral effects by binding LEPR, found in many tissues, which results in the activation of several major signaling pathways. In the hypothalamus, acts as an appetite-regulating factor that induces a decrease in food intake and an increase in energy consumption by inducing anorexinogenic factors and suppressing orexigenic neuropeptides, also regulates bone mass and secretion of hypothalamo-pituitary-adrenal hormones. In the periphery, increases basal metabolism, influences reproductive function, regulates pancreatic beta-cell function and insulin secretion, is pro-angiogenic for endothelial cell and affects innate and adaptive immunity. In the arcuate nucleus of the hypothalamus, activates by depolarization POMC neurons inducing FOS and SOCS3 expression to release anorexigenic peptides and inhibits by hyperpolarization NPY neurons inducing SOCS3 with a consequent reduction on release of orexigenic peptides. In addition to its known satiety inducing effect, has a modulatory role in nutrient absorption. In the intestine, reduces glucose absorption by enterocytes by activating PKC and leading to a sequential activation of p38, PI3K and ERK signaling pathways which exerts an inhibitory effect on glucose absorption. Acts as a growth factor on certain tissues, through the activation of different signaling pathways increases expression of genes involved in cell cycle regulation such as CCND1, via JAK2-STAT3 pathway, or VEGFA, via MAPK1/3 and PI3K-AKT1 pathways. May also play an apoptotic role via JAK2-STAT3 pathway and up-regulation of BIRC5 expression. Pro-angiogenic, has mitogenic activity on vascular endothelial cells and plays a role in matrix remodeling by regulating the expression of matrix metalloproteinases (MMPs) and tissue inhibitors of metalloproteinases (TIMPs). In innate immunity, modulates the activity and function of neutrophils by increasing chemotaxis and the secretion of oxygen radicals. Increases phagocytosis by macrophages and enhances secretion of pro-inflammatory mediators. Increases cytotoxic ability of NK cells. Plays a pro-inflammatory role, in synergy with IL1B, by inducing NOS2 which promotes the production of IL6, IL8 and Prostaglandin E2, through a signaling pathway that involves JAK2, PI3K, MAP2K1/MEK1 and MAPK14/p38. In adaptive immunity, promotes the switch of memory T-cells towards T helper-1 cell immune responses. Increases CD4(+)CD25(-) T-cell proliferation and reduces autophagy during TCR (T-cell receptor) stimulation, through MTOR signaling pathway activation and BCL2 up-regulation. This is Leptin from Homo sapiens (Human).